Consider the following 201-residue polypeptide: Imidazole glycerol phosphate synthase subunit HisH (201 aa).

A Glutamine amidotransferase type-1 domain is found at 2-201 (KVVILDTGCA…ARLLKNFLEM (200 aa)). Cys77 serves as the catalytic Nucleophile. Active-site residues include His183 and Glu185.

As to quaternary structure, heterodimer of HisH and HisF.

The protein localises to the cytoplasm. The catalysed reaction is 5-[(5-phospho-1-deoxy-D-ribulos-1-ylimino)methylamino]-1-(5-phospho-beta-D-ribosyl)imidazole-4-carboxamide + L-glutamine = D-erythro-1-(imidazol-4-yl)glycerol 3-phosphate + 5-amino-1-(5-phospho-beta-D-ribosyl)imidazole-4-carboxamide + L-glutamate + H(+). It catalyses the reaction L-glutamine + H2O = L-glutamate + NH4(+). The protein operates within amino-acid biosynthesis; L-histidine biosynthesis; L-histidine from 5-phospho-alpha-D-ribose 1-diphosphate: step 5/9. IGPS catalyzes the conversion of PRFAR and glutamine to IGP, AICAR and glutamate. The HisH subunit catalyzes the hydrolysis of glutamine to glutamate and ammonia as part of the synthesis of IGP and AICAR. The resulting ammonia molecule is channeled to the active site of HisF. The polypeptide is Imidazole glycerol phosphate synthase subunit HisH (Photorhabdus laumondii subsp. laumondii (strain DSM 15139 / CIP 105565 / TT01) (Photorhabdus luminescens subsp. laumondii)).